Here is a 344-residue protein sequence, read N- to C-terminus: Dihydroorotase (344 aa).

2 residues coordinate Zn(2+): His-14 and His-16. Substrate is bound by residues His-16–Arg-18 and Asn-42. Zn(2+) is bound by residues Lys-99, His-136, and His-174. At Lys-99 the chain carries N6-carboxylysine. His-136 lines the substrate pocket. Residue Leu-219 coordinates substrate. Asp-247 is a binding site for Zn(2+). Residue Asp-247 is part of the active site. Substrate contacts are provided by His-251 and Ala-263.

It belongs to the metallo-dependent hydrolases superfamily. DHOase family. Class II DHOase subfamily. In terms of assembly, homodimer. The cofactor is Zn(2+).

It carries out the reaction (S)-dihydroorotate + H2O = N-carbamoyl-L-aspartate + H(+). The protein operates within pyrimidine metabolism; UMP biosynthesis via de novo pathway; (S)-dihydroorotate from bicarbonate: step 3/3. In terms of biological role, catalyzes the reversible cyclization of carbamoyl aspartate to dihydroorotate. This chain is Dihydroorotase, found in Leptothrix cholodnii (strain ATCC 51168 / LMG 8142 / SP-6) (Leptothrix discophora (strain SP-6)).